The sequence spans 261 residues: Cytochrome c oxidase subunit 3 (261 aa).

The Mitochondrial matrix portion of the chain corresponds to 1-15 (MTHQTHAYHMVNPSP). The helical transmembrane segment at 16 to 34 (WPLTGALSALLMTSGLAMW) threads the bilayer. At 35 to 40 (FHYNLT) the chain is on the mitochondrial intermembrane side. The chain crosses the membrane as a helical span at residues 41-66 (LLLTLGMTTNLLTMYQWWRDIIREST). The Mitochondrial matrix portion of the chain corresponds to 67–72 (FQGHHT). The chain crosses the membrane as a helical span at residues 73 to 105 (PIVQKGLRYGMILFIISEVFFFAGFFWAFYHSS). Over 106 to 128 (LAPTPELGGCWPPTGIIPLNPLE) the chain is Mitochondrial intermembrane. A helical membrane pass occupies residues 129–152 (VPLLNTSVLLASGVSITWAHHSLM). The Mitochondrial matrix segment spans residues 153-155 (EGN). The helical transmembrane segment at 156–183 (RKHMLQALFITISLGVYFTLLQASEYYE) threads the bilayer. Over 184 to 190 (TSFTISD) the chain is Mitochondrial intermembrane. A helical transmembrane segment spans residues 191 to 223 (GVYGSTFFMATGFHGLHVIIGSTFLIVCFLRQL). The Mitochondrial matrix portion of the chain corresponds to 224–232 (KYHFTSNHH). A helical membrane pass occupies residues 233–256 (FGFEAAAWYWHFVDVVWLFLYVSI). At 257-261 (YWWGS) the chain is on the mitochondrial intermembrane side.

It belongs to the cytochrome c oxidase subunit 3 family. In terms of assembly, component of the cytochrome c oxidase (complex IV, CIV), a multisubunit enzyme composed of 14 subunits. The complex is composed of a catalytic core of 3 subunits MT-CO1, MT-CO2 and MT-CO3, encoded in the mitochondrial DNA, and 11 supernumerary subunits COX4I, COX5A, COX5B, COX6A, COX6B, COX6C, COX7A, COX7B, COX7C, COX8 and NDUFA4, which are encoded in the nuclear genome. The complex exists as a monomer or a dimer and forms supercomplexes (SCs) in the inner mitochondrial membrane with NADH-ubiquinone oxidoreductase (complex I, CI) and ubiquinol-cytochrome c oxidoreductase (cytochrome b-c1 complex, complex III, CIII), resulting in different assemblies (supercomplex SCI(1)III(2)IV(1) and megacomplex MCI(2)III(2)IV(2)).

The protein resides in the mitochondrion inner membrane. It carries out the reaction 4 Fe(II)-[cytochrome c] + O2 + 8 H(+)(in) = 4 Fe(III)-[cytochrome c] + 2 H2O + 4 H(+)(out). Functionally, component of the cytochrome c oxidase, the last enzyme in the mitochondrial electron transport chain which drives oxidative phosphorylation. The respiratory chain contains 3 multisubunit complexes succinate dehydrogenase (complex II, CII), ubiquinol-cytochrome c oxidoreductase (cytochrome b-c1 complex, complex III, CIII) and cytochrome c oxidase (complex IV, CIV), that cooperate to transfer electrons derived from NADH and succinate to molecular oxygen, creating an electrochemical gradient over the inner membrane that drives transmembrane transport and the ATP synthase. Cytochrome c oxidase is the component of the respiratory chain that catalyzes the reduction of oxygen to water. Electrons originating from reduced cytochrome c in the intermembrane space (IMS) are transferred via the dinuclear copper A center (CU(A)) of subunit 2 and heme A of subunit 1 to the active site in subunit 1, a binuclear center (BNC) formed by heme A3 and copper B (CU(B)). The BNC reduces molecular oxygen to 2 water molecules using 4 electrons from cytochrome c in the IMS and 4 protons from the mitochondrial matrix. The chain is Cytochrome c oxidase subunit 3 (MT-CO3) from Felis catus (Cat).